A 228-amino-acid chain; its full sequence is ATP phosphoribosyltransferase (228 aa).

Belongs to the ATP phosphoribosyltransferase family. Short subfamily. Heteromultimer composed of HisG and HisZ subunits.

It is found in the cytoplasm. It carries out the reaction 1-(5-phospho-beta-D-ribosyl)-ATP + diphosphate = 5-phospho-alpha-D-ribose 1-diphosphate + ATP. Its pathway is amino-acid biosynthesis; L-histidine biosynthesis; L-histidine from 5-phospho-alpha-D-ribose 1-diphosphate: step 1/9. Functionally, catalyzes the condensation of ATP and 5-phosphoribose 1-diphosphate to form N'-(5'-phosphoribosyl)-ATP (PR-ATP). Has a crucial role in the pathway because the rate of histidine biosynthesis seems to be controlled primarily by regulation of HisG enzymatic activity. The sequence is that of ATP phosphoribosyltransferase from Moorella thermoacetica (strain ATCC 39073 / JCM 9320).